Reading from the N-terminus, the 2948-residue chain is Transforming acidic coiled-coil-containing protein 2 (2948 aa).

The segment covering 1-30 (MGNENSTSDNQRTLSAQTPRSAQPPGNSQN) has biased composition (polar residues). Disordered regions lie at residues 1-304 (MGNE…TDDL), 314-333 (RSNS…QESC), 392-453 (AAGG…MPVS), 465-785 (LVGL…PQGE), 825-964 (SSEK…VSPP), 985-1050 (CTGQ…QPDS), 1062-1154 (ALAP…GEAT), 1243-1274 (AAQR…VGEP), 1296-1400 (QPGA…EQIA), 1427-1463 (PGEK…VTLL), 1493-1661 (ASDK…GERR), 1675-1705 (LGNQ…AGEA), 1741-1878 (VLPG…ESPT), 1907-2035 (HAGL…SSGT), and 2052-2460 (LEPR…ETPP). Positions 174–184 (GRERQPKEEGQ) are enriched in basic and acidic residues. Residues Ser197, Ser201, and Ser269 each carry the phosphoserine modification. Val325 carries the phosphothreonine modification. Ser493 is modified (phosphoserine). A compositionally biased stretch (basic and acidic residues) spans 496 to 507 (ERGEHLNTEQSH). A phosphoserine mark is found at Ser561, Ser571, and Ser575. Over residues 604 to 629 (SKRDPEVGKDELSKPSSDAESRDHPS) the composition is skewed to basic and acidic residues. A Phosphoserine modification is found at Ser758. The span at 911 to 926 (SDTPTSSPTDMVWESS) shows a compositional bias: low complexity. Ser962 carries the phosphoserine modification. The segment covering 985–996 (CTGQGPNKSQQA) has biased composition (polar residues). A Phosphoserine modification is found at Ser1025. Phosphoserine occurs at positions 1267 and 1313. The span at 1348–1357 (ATAPGAGAKA) shows a compositional bias: low complexity. A compositionally biased stretch (polar residues) spans 1383 to 1400 (DPKQGTSGGVDTSSEQIA). Ser1562 carries the phosphoserine modification. 2 stretches are compositionally biased toward basic and acidic residues: residues 1801 to 1823 (DETH…RESP) and 1834 to 1854 (PKKD…RGAE). The segment covering 1862–1873 (ADDIIQPAAPAD) has biased composition (low complexity). The segment covering 1939–1948 (PAKDLSRSSD) has biased composition (basic and acidic residues). The segment covering 1963–1976 (KAPPAPPPPPPEVI) has biased composition (pro residues). Ser2072 carries the post-translational modification Phosphoserine. Polar residues predominate over residues 2074–2102 (DSVPISKSTLSRSLSLQASDFDGASSSGN). Positions 2114–2124 (STGSSSASSTL) are enriched in low complexity. The span at 2125–2141 (KRTKKPRPPSLKKKQTT) shows a compositional bias: basic residues. A phosphoserine mark is found at Ser2161 and Ser2226. Thr2246 is subject to Phosphothreonine. Ser2256 is modified (phosphoserine). A compositionally biased stretch (basic and acidic residues) spans 2265-2275 (LEFDYSEDKSS). Residues 2288 to 2305 (KIGKKPVAKMPLRRPKMK) are compositionally biased toward basic residues. Positions 2315–2403 (PASPPRSPAE…SPASFEIPAS (89 aa)) constitute an SPAZ domain. 7 positions are modified to phosphoserine: Ser2317, Ser2321, Ser2359, Ser2389, Ser2392, Ser2394, and Ser2403. Polar residues predominate over residues 2348 to 2368 (NPFSSTSKMQESPKLPQQSYN). The segment covering 2382 to 2395 (KTSSKTPSSPSKSP) has biased composition (low complexity). 4 positions are modified to phosphothreonine: Thr2430, Thr2451, Thr2455, and Thr2458. 2 positions are modified to phosphoserine: Ser2512 and Ser2534. Thr2553 is subject to Phosphothreonine. Positions 2555-2577 (QESPVKSSPVRMSESPTPCSGSS) are disordered. Ser2557 and Ser2569 each carry phosphoserine. Positions 2568-2577 (ESPTPCSGSS) are enriched in polar residues. A Phosphothreonine modification is found at Thr2625. 2 coiled-coil regions span residues 2675-2703 (AQKL…LASR) and 2746-2947 (DLDS…KMGK).

It belongs to the TACC family. Interacts with CCDC100/CEP120. Interacts with microtubules. Interacts with YEATS4, GCN5L2 and PCAF. Post-translationally, phosphorylated by TTK; which is required for localization in centrosome. Strongly expressed in heart, skeletal muscle, brain, prostate, thyroid and trachea.

The protein localises to the cytoplasm. Its subcellular location is the nucleus. It localises to the cytoskeleton. It is found in the microtubule organizing center. The protein resides in the centrosome. Its function is as follows. Plays a role in the microtubule-dependent coupling of the nucleus and the centrosome. Involved in the processes that regulate centrosome-mediated interkinetic nuclear migration (INM) of neural progenitors. May play a role in organizing centrosomal microtubules. May act as a tumor suppressor protein. May represent a tumor progression marker. The chain is Transforming acidic coiled-coil-containing protein 2 (TACC2) from Homo sapiens (Human).